The following is a 265-amino-acid chain: Hydroxyethylthiazole kinase (265 aa).

Met-36 lines the substrate pocket. Lys-112 and Ser-160 together coordinate ATP. Gly-187 contacts substrate.

The protein belongs to the Thz kinase family. It depends on Mg(2+) as a cofactor.

The enzyme catalyses 5-(2-hydroxyethyl)-4-methylthiazole + ATP = 4-methyl-5-(2-phosphooxyethyl)-thiazole + ADP + H(+). It functions in the pathway cofactor biosynthesis; thiamine diphosphate biosynthesis; 4-methyl-5-(2-phosphoethyl)-thiazole from 5-(2-hydroxyethyl)-4-methylthiazole: step 1/1. In terms of biological role, catalyzes the phosphorylation of the hydroxyl group of 4-methyl-5-beta-hydroxyethylthiazole (THZ). In Clostridium perfringens (strain SM101 / Type A), this protein is Hydroxyethylthiazole kinase.